The following is a 172-amino-acid chain: MPLLDSFTVDHTRMNAPAVRVAKTMQTPKGDTITVFDLRFTAPNKDILSERGIHTLEHLYAGFMRAHLNGSAVEIIDISPMGCRTGFYMSLIGTPSEQQVAEAWLAAMQDVLKVENQNKIPELNEYQCGTAAMHSLDEAKEIANAIIAAGISVNKNDELALPESMLQELKID.

His54, His58, and Cys128 together coordinate Fe cation.

It belongs to the LuxS family. As to quaternary structure, homodimer. The cofactor is Fe cation.

It carries out the reaction S-(5-deoxy-D-ribos-5-yl)-L-homocysteine = (S)-4,5-dihydroxypentane-2,3-dione + L-homocysteine. Its function is as follows. Involved in the synthesis of autoinducer 2 (AI-2) which is secreted by bacteria and is used to communicate both the cell density and the metabolic potential of the environment. The regulation of gene expression in response to changes in cell density is called quorum sensing. Catalyzes the transformation of S-ribosylhomocysteine (RHC) to homocysteine (HC) and 4,5-dihydroxy-2,3-pentadione (DPD). This is S-ribosylhomocysteine lyase from Vibrio atlanticus (strain LGP32) (Vibrio splendidus (strain Mel32)).